Consider the following 444-residue polypeptide: Maltoporin (444 aa).

A signal peptide spans 1-24; sequence MITLRKVPLALAIAAGILSAQAGA.

This sequence belongs to the porin LamB (TC 1.B.3) family. Homotrimer formed of three 18-stranded antiparallel beta-barrels, containing three independent channels.

It is found in the cell outer membrane. It catalyses the reaction beta-maltose(in) = beta-maltose(out). Functionally, involved in the transport of maltose and maltodextrins. In Enterobacter sp. (strain 638), this protein is Maltoporin.